The primary structure comprises 146 residues: MKYNPRVTSSRRKNRKAHFTASSSERRVIMSSPLSTDLRQKYNVRSMPIRKDDEVQIVRGTYKGREGKVVQVYRRKWVIHIERITREKVNGTTVNVGIQPSKVVITKLRLDKDRKSLLERKAKGRAAADKEKGTKFTSEDVMQNVD.

2 disordered regions span residues 1 to 26 (MKYN…SSER) and 121 to 146 (KAKG…QNVD). Positions 9–18 (SSRRKNRKAH) are enriched in basic residues. Residues 121-138 (KAKGRAAADKEKGTKFTS) are compositionally biased toward basic and acidic residues.

The protein belongs to the universal ribosomal protein uL24 family.

In Arabidopsis thaliana (Mouse-ear cress), this protein is Large ribosomal subunit protein uL24z (RPL26A).